Here is a 193-residue protein sequence, read N- to C-terminus: Molybdenum cofactor guanylyltransferase (193 aa).

Residues 8 to 10 (LAG), K21, D67, and D98 each bind GTP. A Mg(2+)-binding site is contributed by D98.

Belongs to the MobA family. Monomer. Mg(2+) serves as cofactor.

The protein localises to the cytoplasm. The catalysed reaction is Mo-molybdopterin + GTP + H(+) = Mo-molybdopterin guanine dinucleotide + diphosphate. Functionally, transfers a GMP moiety from GTP to Mo-molybdopterin (Mo-MPT) cofactor (Moco or molybdenum cofactor) to form Mo-molybdopterin guanine dinucleotide (Mo-MGD) cofactor. In Cereibacter sphaeroides (strain ATCC 17029 / ATH 2.4.9) (Rhodobacter sphaeroides), this protein is Molybdenum cofactor guanylyltransferase.